The following is a 211-amino-acid chain: Beta-crystallin B3 (211 aa).

N-acetylmethionine is present on methionine 1. An N-acetylalanine; in Beta-crystallin B3, N-terminally processed modification is found at alanine 2. The interval 2 to 23 is N-terminal arm; sequence AEQHGAPEQAAAGKSHGGLGGS. Beta/gamma crystallin 'Greek key' domains lie at 24-63 and 64-108; these read YKVT…QVES and GPWL…RPLH. A connecting peptide region spans residues 109–113; that stretch reads IDGPD. Beta/gamma crystallin 'Greek key' domains lie at 114–155 and 156–198; these read HKLH…RVIN and GTWV…RRIR. The interval 200–211 is C-terminal arm; the sequence is QKWHKRGCFLSS.

Belongs to the beta/gamma-crystallin family. In terms of assembly, homo/heterodimer, or complexes of higher-order. The structure of beta-crystallin oligomers seems to be stabilized through interactions between the N-terminal arms.

Functionally, crystallins are the dominant structural components of the vertebrate eye lens. The polypeptide is Beta-crystallin B3 (Crybb3) (Mus musculus (Mouse)).